A 123-amino-acid polypeptide reads, in one-letter code: Ribosome-binding factor A (123 aa).

Belongs to the RbfA family. Monomer. Binds 30S ribosomal subunits, but not 50S ribosomal subunits or 70S ribosomes.

Its subcellular location is the cytoplasm. One of several proteins that assist in the late maturation steps of the functional core of the 30S ribosomal subunit. Associates with free 30S ribosomal subunits (but not with 30S subunits that are part of 70S ribosomes or polysomes). Required for efficient processing of 16S rRNA. May interact with the 5'-terminal helix region of 16S rRNA. In Chlamydia trachomatis serovar A (strain ATCC VR-571B / DSM 19440 / HAR-13), this protein is Ribosome-binding factor A.